The primary structure comprises 334 residues: Putative heme-binding peroxidase (334 aa).

H40 acts as the Proton acceptor in catalysis. H169 lines the heme b pocket. W185 (tryptophan radical intermediate) is an active-site residue.

It belongs to the peroxidase family. Cytochrome c peroxidase subfamily. Requires heme b as cofactor.

Functionally, destroys radicals which are normally produced within the cells and which are toxic to biological systems. The polypeptide is Putative heme-binding peroxidase (Cryptococcus neoformans var. neoformans serotype D (strain JEC21 / ATCC MYA-565) (Filobasidiella neoformans)).